The following is a 55-amino-acid chain: Small integral membrane protein 11 (55 aa).

The chain crosses the membrane as a helical span at residues V9 to G29. Residues Q34–A54 adopt a coiled-coil conformation.

In terms of tissue distribution, expressed in brain, heart, kidney, thymus, liver, stomach, muscle, lung, testis, ovary, skin and eye.

It localises to the membrane. The polypeptide is Small integral membrane protein 11 (Mus musculus (Mouse)).